Here is a 596-residue protein sequence, read N- to C-terminus: Putative terpene synthase 2, chloroplastic (596 aa).

Residues 1–46 constitute a chloroplast transit peptide; that stretch reads MATLSMQVSTLSKQVKNLNTFGMGSASKLPMVARRVSTTRLRPICS. Residues Asp-349 and Asp-353 each coordinate Mn(2+). Residues 349–353 carry the DDXXD motif motif; the sequence is DDVYD. 2 homodimerization regions span residues 355–361 and 427–464; these read YGTLDEL and EAKWYYAGYTPTLAEYLENAKVSISSPTIISQVYFTLP. Residues Asp-493 and Glu-501 each contribute to the Mn(2+) site.

Belongs to the terpene synthase family. As to quaternary structure, homodimer. Mn(2+) is required as a cofactor. Requires Mg(2+) as cofactor.

It localises to the plastid. The protein localises to the chloroplast. It participates in secondary metabolite biosynthesis; terpenoid biosynthesis. Putative monoterpene synthase inactive on geranyl diphosphate (GPP). This chain is Putative terpene synthase 2, chloroplastic, found in Thymus vulgaris (Thyme).